The following is a 181-amino-acid chain: MEPEIKIVNVVVSTQIGTDIDLEYAADILDNAEYEPEQFPGLVCRLSDPKVALLIFRSGKLNCTGAKSKEDAEIAIKKIIKELKEAGMEIIDNPVVSVQNMVATTELGMEPNLDDISTLECTEYEPEQFPGLVYRLSDPKVVVLIFGSGKVVITGLKVIEDAYIAFDKISATLKELEQELY.

Repeat copies occupy residues 7–83 (IVNV…IKEL) and 98–173 (VQNM…SATL).

Belongs to the TBP family.

Its function is as follows. General factor that plays a role in the activation of archaeal genes transcribed by RNA polymerase. Binds specifically to the TATA box promoter element which lies close to the position of transcription initiation. The sequence is that of TATA-box-binding protein from Methanococcus vannielii (strain ATCC 35089 / DSM 1224 / JCM 13029 / OCM 148 / SB).